Consider the following 523-residue polypeptide: Sensory neuron membrane protein 1 (523 aa).

Topologically, residues Met1–Ala10 are cytoplasmic. A helical membrane pass occupies residues Val11–Ile31. At Leu32–Val458 the chain is on the extracellular side. 2 N-linked (GlcNAc...) asparagine glycosylation sites follow: Asn67 and Asn229. Intrachain disulfides connect Cys268-Cys333, Cys297-Cys352, and Cys335-Cys341. The N-linked (GlcNAc...) asparagine glycan is linked to Asn440. Residues Ser459–Phe479 traverse the membrane as a helical segment. The Cytoplasmic segment spans residues His480–Met523. A disordered region spans residues Val499–Met523.

Belongs to the CD36 family. In terms of tissue distribution, localizes to both male and female antennae but not the leg, wing, gut, head, or thoracic ganglia. Detected throughout the sensory epithelium, associating with both sex-pheromone sensilla and plant-volatile sensilla. Differentially expressed both among different sensilla and different neurons within a given sensillum. Expression coincides with that of several other olfactory-specific proteins that are involved in odor detection.

The protein resides in the cell membrane. In terms of biological role, plays an olfactory role that is not restricted to pheromone sensitivity. The protein is Sensory neuron membrane protein 1 of Manduca sexta (Tobacco hawkmoth).